The sequence spans 156 residues: Small ribosomal subunit protein uS7 (156 aa).

It belongs to the universal ribosomal protein uS7 family. In terms of assembly, part of the 30S ribosomal subunit. Contacts proteins S9 and S11.

One of the primary rRNA binding proteins, it binds directly to 16S rRNA where it nucleates assembly of the head domain of the 30S subunit. Is located at the subunit interface close to the decoding center, probably blocks exit of the E-site tRNA. The sequence is that of Small ribosomal subunit protein uS7 from Coprothermobacter proteolyticus (strain ATCC 35245 / DSM 5265 / OCM 4 / BT).